The chain runs to 264 residues: Thymidylate synthase (264 aa).

Residue arginine 21 coordinates dUMP. Histidine 51 provides a ligand contact to (6R)-5,10-methylene-5,6,7,8-tetrahydrofolate. Position 126–127 (126–127) interacts with dUMP; the sequence is RR. The active-site Nucleophile is the cysteine 146. Residues 166–169, asparagine 177, and 207–209 contribute to the dUMP site; these read RSCD and HLY. (6R)-5,10-methylene-5,6,7,8-tetrahydrofolate is bound at residue aspartate 169. Alanine 263 contacts (6R)-5,10-methylene-5,6,7,8-tetrahydrofolate.

Belongs to the thymidylate synthase family. Bacterial-type ThyA subfamily. In terms of assembly, homodimer.

The protein localises to the cytoplasm. The catalysed reaction is dUMP + (6R)-5,10-methylene-5,6,7,8-tetrahydrofolate = 7,8-dihydrofolate + dTMP. It functions in the pathway pyrimidine metabolism; dTTP biosynthesis. Its function is as follows. Catalyzes the reductive methylation of 2'-deoxyuridine-5'-monophosphate (dUMP) to 2'-deoxythymidine-5'-monophosphate (dTMP) while utilizing 5,10-methylenetetrahydrofolate (mTHF) as the methyl donor and reductant in the reaction, yielding dihydrofolate (DHF) as a by-product. This enzymatic reaction provides an intracellular de novo source of dTMP, an essential precursor for DNA biosynthesis. This Aeromonas salmonicida (strain A449) protein is Thymidylate synthase.